Reading from the N-terminus, the 299-residue chain is tRNA pseudouridine synthase B (299 aa).

Aspartate 39 serves as the catalytic Nucleophile.

It belongs to the pseudouridine synthase TruB family. Type 1 subfamily.

The catalysed reaction is uridine(55) in tRNA = pseudouridine(55) in tRNA. Its function is as follows. Responsible for synthesis of pseudouridine from uracil-55 in the psi GC loop of transfer RNAs. This Syntrophomonas wolfei subsp. wolfei (strain DSM 2245B / Goettingen) protein is tRNA pseudouridine synthase B.